Reading from the N-terminus, the 458-residue chain is Bifunctional protein GlmU (458 aa).

Residues 1–230 (MLQIDVVILA…DWEVVGVNDK (230 aa)) form a pyrophosphorylase region. Residues 9–12 (LAAG), lysine 23, glutamine 75, and 80–81 (GT) contribute to the UDP-N-acetyl-alpha-D-glucosamine site. Aspartate 104 contacts Mg(2+). Residues glycine 139, glutamate 155, asparagine 170, and asparagine 228 each coordinate UDP-N-acetyl-alpha-D-glucosamine. A Mg(2+)-binding site is contributed by asparagine 228. The linker stretch occupies residues 231–251 (IQLSTLERAHQQDVAKGLMEQ). The segment at 252 to 458 (GVMFADPARF…NWKRPKKNKD (207 aa)) is N-acetyltransferase. Residues arginine 334 and lysine 352 each contribute to the UDP-N-acetyl-alpha-D-glucosamine site. Residue histidine 364 is the Proton acceptor of the active site. UDP-N-acetyl-alpha-D-glucosamine contacts are provided by tyrosine 367 and asparagine 378. Residues alanine 381, 387 to 388 (NY), serine 406, alanine 424, and arginine 441 contribute to the acetyl-CoA site.

The protein in the N-terminal section; belongs to the N-acetylglucosamine-1-phosphate uridyltransferase family. In the C-terminal section; belongs to the transferase hexapeptide repeat family. As to quaternary structure, homotrimer. The cofactor is Mg(2+).

The protein resides in the cytoplasm. It catalyses the reaction alpha-D-glucosamine 1-phosphate + acetyl-CoA = N-acetyl-alpha-D-glucosamine 1-phosphate + CoA + H(+). The catalysed reaction is N-acetyl-alpha-D-glucosamine 1-phosphate + UTP + H(+) = UDP-N-acetyl-alpha-D-glucosamine + diphosphate. Its pathway is nucleotide-sugar biosynthesis; UDP-N-acetyl-alpha-D-glucosamine biosynthesis; N-acetyl-alpha-D-glucosamine 1-phosphate from alpha-D-glucosamine 6-phosphate (route II): step 2/2. It participates in nucleotide-sugar biosynthesis; UDP-N-acetyl-alpha-D-glucosamine biosynthesis; UDP-N-acetyl-alpha-D-glucosamine from N-acetyl-alpha-D-glucosamine 1-phosphate: step 1/1. It functions in the pathway bacterial outer membrane biogenesis; LPS lipid A biosynthesis. In terms of biological role, catalyzes the last two sequential reactions in the de novo biosynthetic pathway for UDP-N-acetylglucosamine (UDP-GlcNAc). The C-terminal domain catalyzes the transfer of acetyl group from acetyl coenzyme A to glucosamine-1-phosphate (GlcN-1-P) to produce N-acetylglucosamine-1-phosphate (GlcNAc-1-P), which is converted into UDP-GlcNAc by the transfer of uridine 5-monophosphate (from uridine 5-triphosphate), a reaction catalyzed by the N-terminal domain. The protein is Bifunctional protein GlmU of Nitrosomonas eutropha (strain DSM 101675 / C91 / Nm57).